A 110-amino-acid polypeptide reads, in one-letter code: MGIKILLILGLLTLAVVAESANATWTLTKSCVNGQGCIGEDGELDYLMDSETNRRQLAARRSYISYGALRKNNVPCSRRGRSYYDCKKRKRANPYRRGCSVITHCYRQTS.

The first 23 residues, 1 to 23 (MGIKILLILGLLTLAVVAESANA), serve as a signal peptide directing secretion. A propeptide spans 24–58 (TWTLTKSCVNGQGCIGEDGELDYLMDSETNRRQLA) (removed in mature form). 2 cysteine pairs are disulfide-bonded: cysteine 76-cysteine 86 and cysteine 99-cysteine 105.

It belongs to the plant rapid alkalinization factor (RALF) family. Proteolytically cleaved, probably by S1P, a subtilisin-like serine protease (subtilase).

The protein localises to the secreted. Functionally, cell signaling peptide that may regulate plant stress, growth, and development. Mediates a rapid alkalinization of extracellular space by mediating a transient increase in the cytoplasmic Ca(2+) concentration leading to a calcium-dependent signaling events through a cell surface receptor and a concomitant activation of some intracellular mitogen-activated protein kinases. This is Protein RALF-like 19 (RALFL19) from Arabidopsis thaliana (Mouse-ear cress).